Reading from the N-terminus, the 130-residue chain is Large ribosomal subunit protein bL21 (130 aa).

The disordered stretch occupies residues 110–130 (TAPTATEETADATPDTETAAE).

The protein belongs to the bacterial ribosomal protein bL21 family. As to quaternary structure, part of the 50S ribosomal subunit. Contacts protein L20.

In terms of biological role, this protein binds to 23S rRNA in the presence of protein L20. This is Large ribosomal subunit protein bL21 from Nostoc sp. (strain PCC 7120 / SAG 25.82 / UTEX 2576).